The primary structure comprises 291 residues: Probable xyloglucan endotransglucosylase/hydrolase protein 16 (291 aa).

Positions 1 to 24 (MGRILNRTVLMTLLVVTMAGTAFS) are cleaved as a signal peptide. The GH16 domain occupies 25 to 215 (GSFNEEFDLT…WSKAPFTAYY (191 aa)). The Nucleophile role is filled by glutamate 101. The Proton donor role is filled by glutamate 105. Glutamate 105 is a binding site for xyloglucan. An N-linked (GlcNAc...) asparagine glycan is attached at asparagine 109. Xyloglucan is bound by residues 118–120 (HTN), 128–130 (NRE), 194–195 (DW), and glycine 199. 2 cysteine pairs are disulfide-bonded: cysteine 223/cysteine 232 and cysteine 272/cysteine 286. Arginine 277 provides a ligand contact to xyloglucan.

Belongs to the glycosyl hydrolase 16 family. XTH group 2 subfamily. In terms of processing, contains at least one intrachain disulfide bond essential for its enzymatic activity.

It localises to the secreted. It is found in the cell wall. The protein localises to the extracellular space. The protein resides in the apoplast. The catalysed reaction is breaks a beta-(1-&gt;4) bond in the backbone of a xyloglucan and transfers the xyloglucanyl segment on to O-4 of the non-reducing terminal glucose residue of an acceptor, which can be a xyloglucan or an oligosaccharide of xyloglucan.. Its function is as follows. Catalyzes xyloglucan endohydrolysis (XEH) and/or endotransglycosylation (XET). Cleaves and religates xyloglucan polymers, an essential constituent of the primary cell wall, and thereby participates in cell wall construction of growing tissues. The sequence is that of Probable xyloglucan endotransglucosylase/hydrolase protein 16 (XTH16) from Arabidopsis thaliana (Mouse-ear cress).